Here is a 548-residue protein sequence, read N- to C-terminus: Folylpolyglutamate synthase (548 aa).

Residue 130–133 (GKGS) participates in ATP binding. Positions 157, 234, and 262 each coordinate Mg(2+). ATP is bound by residues arginine 382 and aspartate 396.

The protein belongs to the folylpolyglutamate synthase family. A monovalent cation is required as a cofactor.

The protein resides in the mitochondrion inner membrane. It localises to the mitochondrion matrix. Its subcellular location is the cytoplasm. The catalysed reaction is (6S)-5,6,7,8-tetrahydrofolyl-(gamma-L-Glu)(n) + L-glutamate + ATP = (6S)-5,6,7,8-tetrahydrofolyl-(gamma-L-Glu)(n+1) + ADP + phosphate + H(+). The protein operates within cofactor biosynthesis; tetrahydrofolylpolyglutamate biosynthesis. Functionally, catalyzes conversion of folates to polyglutamate derivatives allowing concentration of folate compounds in the cell and the intracellular retention of these cofactors, which are important substrates for most of the folate-dependent enzymes that are involved in one-carbon transfer reactions involved in purine, pyrimidine and amino acid synthesis. Required for methionine synthesis and maintenance of intact mitochondrial DNA. Involved in telomere maintenance. This is Folylpolyglutamate synthase from Saccharomyces cerevisiae (strain FostersB) (Baker's yeast).